The primary structure comprises 224 residues: COMM domain-containing protein 5 (224 aa).

Ser2 is subject to N-acetylserine. In terms of domain architecture, COMM spans 151–215 (HVADFRWRVD…LVLKEMADLE (65 aa)).

It belongs to the COMM domain-containing protein 5 family. In terms of assembly, component of the commander complex consisting of the CCC subcomplex and the retriever subcomplex. Component of the CCC (COMMD/CCDC22/CCDC93) subcomplex consisting of COMMD1, COMMD2, COMMD3, COMMD4, COMMD5, COMMD6, COMMD7, COMMD8, COMMD9, COMMD10, CCDC22 and CCDC93; within the complex forms a heterodimer with COMMD10. Interacts (via COMM domain) with COMMD1 (via COMM domain). Interacts with RELA, RELB, NFKB1/p105. Interacts with CCDC22, CCDC93, SCNN1B, CUL2, CUL3, CUL4A, CUL4B, CUL7. As to expression, highly expressed in heart, stomach, jejunum, kidney, liver, and adrenal gland. Expression was generally higher in adult organs than in fetal tissues, particularly in heart, kidney, and liver.

The protein resides in the cytoplasm. It is found in the nucleus. In terms of biological role, scaffold protein in the commander complex that is essential for endosomal recycling of transmembrane cargos; the commander complex is composed of the CCC subcomplex and the retriever subcomplex. May modulate activity of cullin-RING E3 ubiquitin ligase (CRL) complexes. Negatively regulates cell proliferation. Negatively regulates cell cycle G2/M phase transition probably by transactivating p21/CDKN1A through the p53/TP53-independent signaling pathway. Involved in kidney proximal tubule morphogenesis. Down-regulates activation of NF-kappa-B. In Homo sapiens (Human), this protein is COMM domain-containing protein 5 (COMMD5).